A 366-amino-acid polypeptide reads, in one-letter code: 3-dehydroquinate synthase (366 aa).

NAD(+) is bound by residues 75 to 80 (DGEQYK), 109 to 113 (GVIGD), 133 to 134 (TT), K146, K155, and 173 to 176 (CLST). Zn(2+) contacts are provided by E188, H251, and H268.

The protein belongs to the sugar phosphate cyclases superfamily. Dehydroquinate synthase family. Co(2+) serves as cofactor. Requires Zn(2+) as cofactor. NAD(+) is required as a cofactor.

It localises to the cytoplasm. It carries out the reaction 7-phospho-2-dehydro-3-deoxy-D-arabino-heptonate = 3-dehydroquinate + phosphate. It participates in metabolic intermediate biosynthesis; chorismate biosynthesis; chorismate from D-erythrose 4-phosphate and phosphoenolpyruvate: step 2/7. Its function is as follows. Catalyzes the conversion of 3-deoxy-D-arabino-heptulosonate 7-phosphate (DAHP) to dehydroquinate (DHQ). This chain is 3-dehydroquinate synthase, found in Vibrio campbellii (strain ATCC BAA-1116).